The following is a 115-amino-acid chain: Large ribosomal subunit protein uL18 (115 aa).

It belongs to the universal ribosomal protein uL18 family. In terms of assembly, part of the 50S ribosomal subunit; part of the 5S rRNA/L5/L18/L25 subcomplex. Contacts the 5S and 23S rRNAs.

Functionally, this is one of the proteins that bind and probably mediate the attachment of the 5S RNA into the large ribosomal subunit, where it forms part of the central protuberance. The protein is Large ribosomal subunit protein uL18 of Baumannia cicadellinicola subsp. Homalodisca coagulata.